A 696-amino-acid chain; its full sequence is Putative cyclic nucleotide-gated ion channel 13 (696 aa).

At 1 to 81 (MAFGRNNRVR…QGSFLQNWNK (81 aa)) the chain is on the cytoplasmic side. The disordered stretch occupies residues 45–65 (KPLSFGSHNKKRDSNSSTTTQ). A helical transmembrane segment spans residues 82–102 (IFLFASVIALAIDPLFFYIPI). Residues 103–116 (VDGERHCLNLHRNL) are Extracellular-facing. Residues 117–137 (EIAASVLRTFIDAFYIIHIVF) form a helical membrane-spanning segment. Topologically, residues 138–170 (QFRTAYISPSSRVFGRGELVDDPKAIAIKYLSS) are cytoplasmic. The chain crosses the membrane as a helical span at residues 171–191 (YFIIDLLSILPLPQLVVLAVI). Residues 192-204 (PNVNKPVSLITKD) lie on the Extracellular side of the membrane. The chain crosses the membrane as a helical span at residues 205–225 (YLITVIFTQYIPRILRIYPLY). The Cytoplasmic portion of the chain corresponds to 226–243 (TEVTRTSGIVTETAWAGA). A helical transmembrane segment spans residues 244–264 (AWNLSLYMLASHVFGALWYLI). Residues 265–367 (SVEREDRCWR…GQNLNTSKFV (103 aa)) lie on the Extracellular side of the membrane. A helical transmembrane segment spans residues 368 to 388 (GEIIFAVSICISGLVLFALLI). The Cytoplasmic portion of the chain corresponds to 389–696 (GNMQKYLEST…SEPDFSLRNP (308 aa)). A nucleoside 3',5'-cyclic phosphate contacts are provided by residues 474–598 (LFEI…SKQL) and glutamate 545. A calmodulin-binding region spans residues 590–605 (FRRLHSKQLQHTFRFY). Positions 610 to 639 (RTWGASFIQAAWRRHCRRKLARSLTEEEDR) constitute an IQ domain. The interval 677–696 (NNLPLLPPKPSEPDFSLRNP) is disordered.

This sequence belongs to the cyclic nucleotide-gated cation channel (TC 1.A.1.5) family. As to quaternary structure, homotetramer or heterotetramer.

The protein localises to the cell membrane. Putative cyclic nucleotide-gated ion channel. In Arabidopsis thaliana (Mouse-ear cress), this protein is Putative cyclic nucleotide-gated ion channel 13 (CNGC13).